A 410-amino-acid polypeptide reads, in one-letter code: Probable tRNA sulfurtransferase (410 aa).

Residues 58-167 form the THUMP domain; it reads AELTRRLQEV…RREIFVSVER (110 aa). ATP contacts are provided by residues 185–186, 210–211, arginine 267, glycine 289, and glutamine 298; these read LL and HF.

This sequence belongs to the ThiI family.

Its subcellular location is the cytoplasm. It catalyses the reaction [ThiI sulfur-carrier protein]-S-sulfanyl-L-cysteine + a uridine in tRNA + 2 reduced [2Fe-2S]-[ferredoxin] + ATP + H(+) = [ThiI sulfur-carrier protein]-L-cysteine + a 4-thiouridine in tRNA + 2 oxidized [2Fe-2S]-[ferredoxin] + AMP + diphosphate. The catalysed reaction is [ThiS sulfur-carrier protein]-C-terminal Gly-Gly-AMP + S-sulfanyl-L-cysteinyl-[cysteine desulfurase] + AH2 = [ThiS sulfur-carrier protein]-C-terminal-Gly-aminoethanethioate + L-cysteinyl-[cysteine desulfurase] + A + AMP + 2 H(+). The protein operates within cofactor biosynthesis; thiamine diphosphate biosynthesis. Its function is as follows. Catalyzes the ATP-dependent transfer of a sulfur to tRNA to produce 4-thiouridine in position 8 of tRNAs, which functions as a near-UV photosensor. Also catalyzes the transfer of sulfur to the sulfur carrier protein ThiS, forming ThiS-thiocarboxylate. This is a step in the synthesis of thiazole, in the thiamine biosynthesis pathway. The sulfur is donated as persulfide by IscS. The chain is Probable tRNA sulfurtransferase from Nocardia farcinica (strain IFM 10152).